The following is a 265-amino-acid chain: Acyl-[acyl-carrier-protein]--UDP-N-acetylglucosamine O-acyltransferase (265 aa).

It belongs to the transferase hexapeptide repeat family. LpxA subfamily. As to quaternary structure, homotrimer.

The protein resides in the cytoplasm. The enzyme catalyses a (3R)-hydroxyacyl-[ACP] + UDP-N-acetyl-alpha-D-glucosamine = a UDP-3-O-[(3R)-3-hydroxyacyl]-N-acetyl-alpha-D-glucosamine + holo-[ACP]. It participates in glycolipid biosynthesis; lipid IV(A) biosynthesis; lipid IV(A) from (3R)-3-hydroxytetradecanoyl-[acyl-carrier-protein] and UDP-N-acetyl-alpha-D-glucosamine: step 1/6. In terms of biological role, involved in the biosynthesis of lipid A, a phosphorylated glycolipid that anchors the lipopolysaccharide to the outer membrane of the cell. This is Acyl-[acyl-carrier-protein]--UDP-N-acetylglucosamine O-acyltransferase from Polynucleobacter asymbioticus (strain DSM 18221 / CIP 109841 / QLW-P1DMWA-1) (Polynucleobacter necessarius subsp. asymbioticus).